A 416-amino-acid chain; its full sequence is Serine hydroxymethyltransferase (416 aa).

Residues Leu-118 and 122–124 (GHL) each bind (6S)-5,6,7,8-tetrahydrofolate. Lys-226 is subject to N6-(pyridoxal phosphate)lysine. (6S)-5,6,7,8-tetrahydrofolate contacts are provided by residues Glu-242 and 350–352 (SPF).

This sequence belongs to the SHMT family. In terms of assembly, homodimer. The cofactor is pyridoxal 5'-phosphate.

Its subcellular location is the cytoplasm. The enzyme catalyses (6R)-5,10-methylene-5,6,7,8-tetrahydrofolate + glycine + H2O = (6S)-5,6,7,8-tetrahydrofolate + L-serine. Its pathway is one-carbon metabolism; tetrahydrofolate interconversion. It participates in amino-acid biosynthesis; glycine biosynthesis; glycine from L-serine: step 1/1. Functionally, catalyzes the reversible interconversion of serine and glycine with tetrahydrofolate (THF) serving as the one-carbon carrier. This reaction serves as the major source of one-carbon groups required for the biosynthesis of purines, thymidylate, methionine, and other important biomolecules. Also exhibits THF-independent aldolase activity toward beta-hydroxyamino acids, producing glycine and aldehydes, via a retro-aldol mechanism. This Helicobacter pylori (strain ATCC 700392 / 26695) (Campylobacter pylori) protein is Serine hydroxymethyltransferase.